Consider the following 216-residue polypeptide: uncharacterized protein (216 aa).

Residues 54 to 215 (TATQPNEKWT…SPVNYRTQSL (162 aa)) form the Integrase catalytic domain.

This sequence belongs to the transposase IS3/IS150/IS904 family.

This is an uncharacterized protein from Haemophilus influenzae (strain ATCC 51907 / DSM 11121 / KW20 / Rd).